An 815-amino-acid chain; its full sequence is Sodium/hydrogen exchanger 1 (815 aa).

Over 1 to 98 (MVLRSGICGL…FPVLGIDYTH (98 aa)) the chain is Extracellular. A glycan (O-linked (GalNAc...) threonine) is linked at T42. The tract at residues 42–79 (TASTIRSSEPPRERSIGDVTTAPPEVTPESRPVNHSVT) is disordered. O-linked (GalNAc...) serine glycosylation occurs at S56. O-linked (GalNAc...) threonine glycosylation is found at T61, T62, and T68. N-linked (GlcNAc...) asparagine glycosylation is present at N75. The helical transmembrane segment at 99 to 121 (VRTPFEISLWILLACLMKIGFHV) threads the bilayer. Over 122 to 130 (IPTISSIVP) the chain is Cytoplasmic. The chain crosses the membrane as a helical span at residues 131–148 (ESCLLIVVGLLVGGLIKG). Over 149-158 (VGETPPFLQS) the chain is Extracellular. A helical transmembrane segment spans residues 159–176 (DVFFLFLLPPIILDAGYF). Residues 177-186 (LPLRQFTENL) lie on the Cytoplasmic side of the membrane. The helical transmembrane segment at 187 to 215 (GTILIFAVVGTLWNAFFLGGLMYAVCLVG) threads the bilayer. Residues 216–222 (GEQINNI) lie on the Extracellular side of the membrane. A helical membrane pass occupies residues 223–249 (GLLDNLLFGSIISAVDPVAVLAVFEEI). Over 250–252 (HIN) the chain is Cytoplasmic. Residues 253–283 (ELLHILVFGESLLNDAVTVVLYHLFEEFANY) traverse the membrane as a helical segment. Topologically, residues 284–287 (EHVG) are extracellular. Residues 288–322 (IVDIFLGFLSFFVVALGGVLVGVVYGVIAAFTSRF) traverse the membrane as a helical segment. Topologically, residues 323 to 328 (TSHIRV) are cytoplasmic. The chain crosses the membrane as a helical span at residues 329–341 (IEPLFVFLYSYMA). Topologically, residues 342–350 (YLSAELFHL) are extracellular. The chain crosses the membrane as a helical span at residues 351–371 (SGIMALIASGVVMRPYVEANI). The Cytoplasmic portion of the chain corresponds to 372–373 (SH). Residues 374 to 404 (KSHTTIKYFLKMWSSVSETLIFIFLGVSTVA) form a helical membrane-spanning segment. Residues 405–410 (GSHHWN) are Extracellular-facing. The helical transmembrane segment at 411–438 (WTFVISTLLFCLIARVLGVLGLTWFINK) threads the bilayer. Over 439 to 444 (FRIVKL) the chain is Cytoplasmic. The helical transmembrane segment at 445 to 469 (TPKDQFIIAYGGLRGAIAFSLGYLL) threads the bilayer. Residues 470-475 (DKKHFP) lie on the Extracellular side of the membrane. A helical membrane pass occupies residues 476–505 (MCDLFLTAIITVIFFTVFVQGMTIRPLVDL). The interaction with TESC stretch occupies residues 503-545 (VDLLAVKKKQETKRSINEEIHTQFLDHLLTGIEDICGHYGHHH). Residues 506-815 (LAVKKKQETK…EGEPFFPKGQ (310 aa)) are Cytoplasmic-facing. Residues 509-516 (KKKQETKR) are PI(4,5)P2-binding region. Residues 515-545 (KRSINEEIHTQFLDHLLTGIEDICGHYGHHH) form an interaction with CHP2 region. The segment at 540 to 545 (HYGHHH) is confers pH-dependent PI(4,5)P2 binding. Residues 552 to 560 (RFNKKYVKK) are PI(4,5)P2-binding region. A phosphoserine mark is found at S599 and S602. T603 carries the phosphothreonine modification. 2 positions are modified to phosphoserine: S605 and S648. The tract at residues 633–815 (KILRNNLQKT…EGEPFFPKGQ (183 aa)) is interaction with TESC. Residues 633 to 815 (KILRNNLQKT…EGEPFFPKGQ (183 aa)) form an interaction with CALM1 region. The interval 684–687 (LTVP) is interaction with PPP3CA. Phosphoserine occurs at positions 693, 697, and 703. The tract at residues 715-720 (PVITID) is interaction with PPP3CA. Phosphoserine is present on residues S723, S726, and S729. The segment at 744 to 815 (LSRDPAKVAE…EGEPFFPKGQ (72 aa)) is disordered. The residue at position 779 (T779) is a Phosphothreonine. The span at 782–791 (PSDSPSSQRI) shows a compositional bias: polar residues. Phosphoserine is present on residues S785, S787, and S796.

It belongs to the monovalent cation:proton antiporter 1 (CPA1) transporter (TC 2.A.36) family. As to quaternary structure, homodimer; dimerization is crucial for its function. Oligomer. Interacts with CALM1 in a calcium-dependent manner. Interacts with TESC. Interacts (via the C-terminal domain) with CHP1; the interaction occurs at the plasma membrane in a calcium-dependent manner and facilitates the maturation, cell surface expression, and function of SLC9A3. Interacts with CHP2; the interaction occurs in a calcium-dependent manner. Interacts with EZR; regulates the cytoskeletal interactions of SLC9A1 and promotes stress fiber formation. In terms of processing, O-glycosylated. Post-translationally, ubiquitinated, leading to its degradation by the proteasome. Ubiquitination is reduced by CHP1. Phosphorylation at Thr-779 increases SLC9A1 activity. Specifically dephosphorylated at Thr-779 by PPP3CA that negatively regulates SLC9A1 activity. Phosphorylation at Ser-648 by AKT1 reduces SLC9A1 binding to CALM1. In terms of processing, palmitoylated; may play a major role in SLC9A1 regulation. Kidney and intestine.

The protein localises to the cell membrane. The protein resides in the basolateral cell membrane. It carries out the reaction Na(+)(in) + H(+)(out) = Na(+)(out) + H(+)(in). The enzyme catalyses Li(+)(out) + H(+)(in) = Li(+)(in) + H(+)(out). It catalyses the reaction Li(+)(in) + Na(+)(out) = Li(+)(out) + Na(+)(in). Activated at acidic pHs. Inhibited by amiloride and 5-amino-substituted derivatives. Inhibited by cariporide and eniporide. Phosphatidylinositol 4,5-bisphosphate (PI(4,5)P2) and phosphatidylinositol 3,4,5-trisphosphate (PI(3,4,5)P3) bind and differentially regulate SLC9A1 activity. Functionally, electroneutral Na(+) /H(+) antiporter that extrudes Na(+) in exchange for external protons driven by the inward sodium ion chemical gradient, protecting cells from acidification that occurs from metabolism. Exchanges intracellular H(+) ions for extracellular Na(+) in 1:1 stoichiometry. Plays a key role in maintening intracellular pH neutral and cell volume, and thus is important for cell growth, proliferation, migration and survival. In addition, can transport lithium Li(+) and also functions as a Na(+)/Li(+) antiporter. SLC9A1 also functions in membrane anchoring and organization of scaffolding complexes that coordinate signaling inputs. The chain is Sodium/hydrogen exchanger 1 from Homo sapiens (Human).